A 131-amino-acid chain; its full sequence is Small ribosomal subunit protein uS11 (131 aa).

Belongs to the universal ribosomal protein uS11 family. As to quaternary structure, part of the 30S ribosomal subunit. Interacts with proteins S7 and S18. Binds to IF-3.

Its function is as follows. Located on the platform of the 30S subunit, it bridges several disparate RNA helices of the 16S rRNA. Forms part of the Shine-Dalgarno cleft in the 70S ribosome. This Granulibacter bethesdensis (strain ATCC BAA-1260 / CGDNIH1) protein is Small ribosomal subunit protein uS11.